The primary structure comprises 274 residues: Glucosamine-6-phosphate deaminase (274 aa).

Residue Asp72 is the Proton acceptor; for enolization step of the active site. Asp141 acts as the For ring-opening step in catalysis. Residue His143 is the Proton acceptor; for ring-opening step of the active site. Glu148 acts as the For ring-opening step in catalysis.

This sequence belongs to the glucosamine/galactosamine-6-phosphate isomerase family. In terms of assembly, homohexamer.

It localises to the cytoplasm. It carries out the reaction alpha-D-glucosamine 6-phosphate + H2O = beta-D-fructose 6-phosphate + NH4(+). It functions in the pathway nucleotide-sugar biosynthesis; UDP-N-acetyl-alpha-D-glucosamine biosynthesis; alpha-D-glucosamine 6-phosphate from D-fructose 6-phosphate: step 1/1. Catalyzes the reversible conversion of alpha-D-glucosamine 6-phosphate (GlcN-6P) into beta-D-fructose 6-phosphate (Fru-6P) and ammonium ion, a regulatory reaction step in de novo uridine diphosphate-N-acetyl-alpha-D-glucosamine (UDP-GlcNAc) biosynthesis via hexosamine pathway. This Drosophila pseudoobscura pseudoobscura (Fruit fly) protein is Glucosamine-6-phosphate deaminase.